We begin with the raw amino-acid sequence, 274 residues long: MRYIGINVNTGKDVEGRLLKKIVEAIEDNCKDVEVKIYKDSIGLEKKETENLEVVIVLGGDGTILKASKYLAKYNVPILGINIGNLGFLTETESSNFIFSIRNYFKGKYYIEERNMVQCTTEYKGIKKEFHGLNDIVVTKGDVGKTAKYDLYIDGNFYTKLSSDGVIVSTSTGSTAYSLSAGGPIIYPTLDALCLTPICGHSLRIRSIVLNHKSIIKIISQSENVILTVDGEEINFLENVKEFLITSSPYKCKLIKLEGEHRDYYSILRNKLYL.

The active-site Proton acceptor is Asp61. Residues 61–62 (DG), Lys66, 134–135 (ND), Lys145, Asp164, and 175–180 (TAYSLS) each bind NAD(+).

It belongs to the NAD kinase family. The cofactor is a divalent metal cation.

The protein resides in the cytoplasm. It catalyses the reaction NAD(+) + ATP = ADP + NADP(+) + H(+). Its function is as follows. Involved in the regulation of the intracellular balance of NAD and NADP, and is a key enzyme in the biosynthesis of NADP. Catalyzes specifically the phosphorylation on 2'-hydroxyl of the adenosine moiety of NAD to yield NADP. The sequence is that of NAD kinase from Clostridium tetani (strain Massachusetts / E88).